The primary structure comprises 717 residues: Patatin-like phospholipase domain-containing protein PGUG_03164 (717 aa).

The helical transmembrane segment at 123-143 (WPFLIIITVWILLLCILYTVV) threads the bilayer. A PNPLA domain is found at 298-490 (LCLSGGACFA…RTDIPIDALK (193 aa)). The GXSXG signature appears at 329–333 (GTSGG). Catalysis depends on serine 331, which acts as the Nucleophile. Residue aspartate 477 is the Proton acceptor of the active site. Residues 680 to 717 (YDSESSAEETLSPGFSQGTHAVLTDESDDDSSDDEIDD) are disordered. A compositionally biased stretch (acidic residues) spans 704-717 (DESDDDSSDDEIDD).

The protein belongs to the PLPL family.

The protein localises to the membrane. Functionally, probable lipid hydrolase. The protein is Patatin-like phospholipase domain-containing protein PGUG_03164 of Meyerozyma guilliermondii (strain ATCC 6260 / CBS 566 / DSM 6381 / JCM 1539 / NBRC 10279 / NRRL Y-324) (Yeast).